The primary structure comprises 204 residues: MKDTSLPSTAGAVNKLIDSLGKLPGIGPKSAQRLAFYLMRAPEEQVLTLSDTIRSIKNQISQCRICFNVADSELCPICQNTKREANKICVVEQPQDILALEHVGVYRGYYHVLHGAISPTEGITSQNIRINELMSRLNDGQVDEVILATNPTTEGEATAMYLSRLITPLGIKVTRLARGLPFGTELEYADDVTLSRAMEGRQNF.

A C4-type zinc finger spans residues 63–78 (CRICFNVADSELCPIC). Positions 86–181 (NKICVVEQPQ…KVTRLARGLP (96 aa)) constitute a Toprim domain.

This sequence belongs to the RecR family.

May play a role in DNA repair. It seems to be involved in an RecBC-independent recombinational process of DNA repair. It may act with RecF and RecO. In Dehalococcoides mccartyi (strain ATCC BAA-2266 / KCTC 15142 / 195) (Dehalococcoides ethenogenes (strain 195)), this protein is Recombination protein RecR.